The following is a 357-amino-acid chain: DNA primase small subunit PriS (357 aa).

Residues aspartate 105, aspartate 107, and aspartate 259 contribute to the active site.

Belongs to the eukaryotic-type primase small subunit family. As to quaternary structure, heterodimer of a small subunit (PriS) and a large subunit (PriL). Mg(2+) is required as a cofactor. It depends on Mn(2+) as a cofactor.

Functionally, catalytic subunit of DNA primase, an RNA polymerase that catalyzes the synthesis of short RNA molecules used as primers for DNA polymerase during DNA replication. The small subunit contains the primase catalytic core and has DNA synthesis activity on its own. Binding to the large subunit stabilizes and modulates the activity, increasing the rate of DNA synthesis while decreasing the length of the DNA fragments, and conferring RNA synthesis capability. The DNA polymerase activity may enable DNA primase to also catalyze primer extension after primer synthesis. May also play a role in DNA repair. The protein is DNA primase small subunit PriS of Methanococcus maripaludis (strain C6 / ATCC BAA-1332).